Here is a 243-residue protein sequence, read N- to C-terminus: tRNA (guanine-N(1)-)-methyltransferase (243 aa).

S-adenosyl-L-methionine-binding positions include G108 and L127 to L132.

Belongs to the RNA methyltransferase TrmD family. In terms of assembly, homodimer.

The protein localises to the cytoplasm. The catalysed reaction is guanosine(37) in tRNA + S-adenosyl-L-methionine = N(1)-methylguanosine(37) in tRNA + S-adenosyl-L-homocysteine + H(+). In terms of biological role, specifically methylates guanosine-37 in various tRNAs. The protein is tRNA (guanine-N(1)-)-methyltransferase of Streptococcus equi subsp. zooepidemicus (strain H70).